The following is a 207-amino-acid chain: Guanylate kinase (207 aa).

A Guanylate kinase-like domain is found at 6–185; the sequence is GLLIVLSGPS…AKNRIQSIVE (180 aa). 13 to 20 serves as a coordination point for ATP; the sequence is GPSGVGKG.

It belongs to the guanylate kinase family.

It localises to the cytoplasm. It catalyses the reaction GMP + ATP = GDP + ADP. Functionally, essential for recycling GMP and indirectly, cGMP. The sequence is that of Guanylate kinase from Staphylococcus epidermidis (strain ATCC 12228 / FDA PCI 1200).